Reading from the N-terminus, the 272-residue chain is Ethanolamine ammonia-lyase small subunit (272 aa).

Adenosylcob(III)alamin-binding residues include valine 161, glutamate 182, and cysteine 211.

It belongs to the EutC family. The basic unit is a heterodimer which dimerizes to form tetramers. The heterotetramers trimerize; 6 large subunits form a core ring with 6 small subunits projecting outwards. Requires adenosylcob(III)alamin as cofactor.

It is found in the bacterial microcompartment. It catalyses the reaction ethanolamine = acetaldehyde + NH4(+). It functions in the pathway amine and polyamine degradation; ethanolamine degradation. In terms of biological role, catalyzes the deamination of various vicinal amino-alcohols to oxo compounds. Allows this organism to utilize ethanolamine as the sole source of nitrogen and carbon in the presence of external vitamin B12. In Pseudomonas putida (strain GB-1), this protein is Ethanolamine ammonia-lyase small subunit.